The following is a 423-amino-acid chain: Tyrosine--tRNA ligase (423 aa).

Tyr-35 contributes to the L-tyrosine binding site. Positions 40–49 (PTAPSLHAGH) match the 'HIGH' region motif. L-tyrosine is bound by residues Tyr-170 and Gln-174. Positions 230-234 (KFGKS) match the 'KMSKS' region motif. Lys-233 is an ATP binding site. The S4 RNA-binding domain maps to 355–412 (DLITDLLVATGLSASKGAARRTIAEGGVSVNNMKIDSDEWTPQASDFLHGRWLVLRRG).

Belongs to the class-I aminoacyl-tRNA synthetase family. TyrS type 1 subfamily. As to quaternary structure, homodimer.

Its subcellular location is the cytoplasm. It carries out the reaction tRNA(Tyr) + L-tyrosine + ATP = L-tyrosyl-tRNA(Tyr) + AMP + diphosphate + H(+). Catalyzes the attachment of tyrosine to tRNA(Tyr) in a two-step reaction: tyrosine is first activated by ATP to form Tyr-AMP and then transferred to the acceptor end of tRNA(Tyr). The sequence is that of Tyrosine--tRNA ligase from Mycobacterium sp. (strain KMS).